A 246-amino-acid chain; its full sequence is Probable transcriptional regulatory protein Pden_1905 (246 aa).

The tract at residues 1–21 (MAGHSKWANIQHRKGKQDKLR) is disordered.

Belongs to the TACO1 family.

It is found in the cytoplasm. The polypeptide is Probable transcriptional regulatory protein Pden_1905 (Paracoccus denitrificans (strain Pd 1222)).